A 199-amino-acid polypeptide reads, in one-letter code: Streptomycin biosynthesis protein StrG (199 aa).

It participates in antibiotic biosynthesis; streptomycin biosynthesis. Its function is as follows. May be involved in the formation of N-methyl-L-glucosamine. The sequence is that of Streptomycin biosynthesis protein StrG (strG) from Streptomyces griseus.